Reading from the N-terminus, the 129-residue chain is Small ribosomal subunit protein uS9 (129 aa).

It belongs to the universal ribosomal protein uS9 family.

The polypeptide is Small ribosomal subunit protein uS9 (Pelodictyon phaeoclathratiforme (strain DSM 5477 / BU-1)).